The sequence spans 270 residues: Hematopoietically-expressed homeobox protein HHEX (270 aa).

The interaction with SOX13 stretch occupies residues 1–137 (MQYPHPGPAA…PFLQRPLHKR (137 aa)). Ser53 is subject to Phosphoserine. The segment at residues 137–196 (RKGGQVRFSNDQTIELEKKFETQKYLSPPERKRLAKMLQLSERQVKTWFQNRRAKWRRLK) is a DNA-binding region (homeobox). Residues 137-270 (RKGGQVRFSN…EGDKSYFNAG (134 aa)) form a required for WNT signaling induction region. The interval 194–270 (RLKQENPQSN…EGDKSYFNAG (77 aa)) is disordered. The segment covering 222–241 (PSEQNKGASLDSSQCSPSPA) has biased composition (polar residues). Residues 244-260 (EDLESEISEDSDQEVDI) are compositionally biased toward acidic residues.

As to quaternary structure, interacts with CD81; the interaction prevents nuclear translocation of HHEX. Interacts (via N-terminus) with SOX13; abolishes the SOX13-mediated inhibition of WNT-mediated transcriptional activity via competitive inhibition of the SOX13-TCF7 complex. Interacts with EIF4E; the interaction inhibits EIF4E-mediated mRNA nuclear export. Liver and promyelocytic leukemia cell line HL-60.

It is found in the nucleus. It localises to the nuclear body. Its subcellular location is the cytoplasm. In terms of biological role, recognizes the DNA sequence 5'-ATTAA-3'. Transcriptional repressor. Activator of WNT-mediated transcription in conjunction with CTNNB1. Establishes anterior identity at two levels; acts early to enhance canonical WNT-signaling by repressing expression of TLE4, and acts later to inhibit NODAL-signaling by directly targeting NODAL. Inhibits EIF4E-mediated mRNA nuclear export. May play a role in hematopoietic differentiation. The polypeptide is Hematopoietically-expressed homeobox protein HHEX (HHEX) (Homo sapiens (Human)).